The following is a 138-amino-acid chain: uncharacterized protein (138 aa).

Residues 89-138 (DDYEDDFEDSDFQDGDFDDFEDEDGFDDDDDFEDDDFEYEDEDNDLDFDE) form a disordered region.

This is an uncharacterized protein from Treponema pallidum (strain Nichols).